The sequence spans 103 residues: Large ribosomal subunit protein uL23c (103 aa).

Belongs to the universal ribosomal protein uL23 family. As to quaternary structure, part of the 50S ribosomal subunit.

Its subcellular location is the plastid. It is found in the chloroplast. In terms of biological role, binds to 23S rRNA. The polypeptide is Large ribosomal subunit protein uL23c (rpl23) (Gracilaria tenuistipitata var. liui (Red alga)).